Consider the following 396-residue polypeptide: Probable arginine kinase F46H5.3 (396 aa).

One can recognise a Phosphagen kinase N-terminal domain in the interval Lys-47 to Asn-129. Residue Gly-102 to Tyr-106 participates in substrate binding. Residues Phe-159–Ala-396 enclose the Phosphagen kinase C-terminal domain. ATP-binding positions include Ser-162 to Arg-166 and His-226. Glu-266 contacts substrate. Arg-270 serves as a coordination point for ATP. Residue Cys-312 participates in substrate binding. ATP is bound by residues Arg-321–His-325, Arg-349–Glu-354, and Asp-364. Glu-354 is a substrate binding site.

The protein belongs to the ATP:guanido phosphotransferase family.

The catalysed reaction is L-arginine + ATP = N(omega)-phospho-L-arginine + ADP + H(+). This chain is Probable arginine kinase F46H5.3, found in Caenorhabditis elegans.